Reading from the N-terminus, the 612-residue chain is Amyloid-beta precursor-like protein (612 aa).

The N-terminal stretch at 1-21 (MGPSVRPGFLVVVIGLQFVAA) is a signal peptide. Residues 22-542 (SMEVNSRKFE…NLYANSHANS (521 aa)) lie on the Extracellular side of the membrane. Residues 28–122 (RKFEPMVAFI…PFRCLVGPFQ (95 aa)) form a GFLD subdomain region. In terms of domain architecture, E1 spans 28–189 (RKFEPMVAFI…SGVEFVCCPK (162 aa)). 6 disulfide bridges follow: cysteine 38–cysteine 60, cysteine 71–cysteine 116, cysteine 96–cysteine 103, cysteine 132–cysteine 187, cysteine 143–cysteine 173, and cysteine 157–cysteine 186. N-linked (GlcNAc...) asparagine glycans are attached at residues asparagine 99, asparagine 108, and asparagine 150. The tract at residues 130–189 (EHCIFDHYHDPRVCNEFDQCNETAMSKCSARGMTTQSFAMLWPCQEPGHFSGVEFVCCPK) is cuBD subdomain. Residues 223 to 419 (GDSKYMSKYA…KQVRPNIDKF (197 aa)) enclose the E2 domain. Disordered stretches follow at residues 251–276 (ERDTKMMKDWKAARDSVREKKKTDPK) and 437–490 (QEPT…FDSE). Composition is skewed to basic and acidic residues over residues 439–453 (PTPKEAPVETQKAED) and 470–483 (KPTEARPEQQEDIK). Residues 543-563 (VLGIAIGGVVVFIIIVVAVVM) traverse the membrane as a helical segment. Residues 564 to 612 (LKRRTQRQRVTHGFVEVDPAASPEERHVANMQMSGYENPTYKYFEMQNQ) lie on the Cytoplasmic side of the membrane. Positions 598–612 (GYENPTYKYFEMQNQ) are required for the interaction with kinesin heavy chain and for anterograde transport in axons. A YENPXY motif motif is present at residues 599-604 (YENPTY).

This sequence belongs to the APP family. As to quaternary structure, interacts (via cytoplasmic domain) with kinesin heavy chain. As to expression, expressed in the cervicothoracic ganglion (stellate ganglion) (at protein level).

Its subcellular location is the cell membrane. The protein localises to the cell projection. It localises to the axon. Its function is as follows. Acts as a kinesin I membrane receptor, thereby playing a role in axonal anterograde transport of cargo towards synapses in axons. The chain is Amyloid-beta precursor-like protein from Doryteuthis pealeii (Longfin inshore squid).